The chain runs to 205 residues: Suppressor of IKBKE 1 (205 aa).

Coiled coils occupy residues 4 to 32 (TIDK…LIDQ) and 154 to 192 (KAIQ…ESLR).

Belongs to the SIKE family. Interacts with IKBKE and TBK1 via its coiled coil region. Interaction with TBK1 is disrupted upon viral infection or TLR3 stimulation. Interacts with CDC42BPB. Associates with the STRIPAK core complex composed of PP2A catalytic and scaffolding subunits, the striatins (PP2A regulatory subunits), the striatin-associated proteins MOB4, STRIP1 and STRIP2, PDCD10 and members of the STE20 kinases, such as STK24 and STK26.

Its subcellular location is the cytoplasm. Its function is as follows. Suppressor of IKK-epsilon. Associates with the striatin-interacting phosphatase and kinase (STRIPAK) core complex, forming the extended (SIKE1:SLMAP)STRIPAK complex. The (SIKE1:SLMAP)STRIPAK complex dephosphorylates STK3 leading to the inhibition of Hippo signaling and the control of cell growth. This Xenopus laevis (African clawed frog) protein is Suppressor of IKBKE 1 (sike1).